The primary structure comprises 352 residues: Putative histone-lysine N-methyltransferase ASHH4 (352 aa).

One can recognise an AWS domain in the interval Asp-60 to His-109. Residues Lys-111–Gln-228 enclose the SET domain. Residues Ala-234–Gly-250 form the Post-SET domain.

Belongs to the class V-like SAM-binding methyltransferase superfamily. Histone-lysine methyltransferase family. SET2 subfamily.

It localises to the nucleus. Its subcellular location is the chromosome. The protein resides in the centromere. The enzyme catalyses L-lysyl-[histone] + S-adenosyl-L-methionine = N(6)-methyl-L-lysyl-[histone] + S-adenosyl-L-homocysteine + H(+). Its function is as follows. Histone methyltransferase. This Arabidopsis thaliana (Mouse-ear cress) protein is Putative histone-lysine N-methyltransferase ASHH4 (ASHH4).